The chain runs to 304 residues: PHO85 cyclin-9 (304 aa).

In terms of domain architecture, Cyclin N-terminal spans 19 to 146; that stretch reads EMIQFLATST…LLEYLNWDVR (128 aa).

Belongs to the cyclin family. PCL1,2 subfamily. As to quaternary structure, forms a cyclin-CDK complex with PHO85.

Its function is as follows. M/G1-specific cyclin partner of the cyclin-dependent kinase (CDK) PHO85. May have a role in bud site selection in G1 phase. The polypeptide is PHO85 cyclin-9 (PCL9) (Saccharomyces cerevisiae (strain ATCC 204508 / S288c) (Baker's yeast)).